We begin with the raw amino-acid sequence, 435 residues long: Acetylcholine receptor-like protein cup-4 (435 aa).

The first 24 residues, 1–24 (MRLLLIFTVIFVFYLAILKRDVNA), serve as a signal peptide directing secretion. 4 N-linked (GlcNAc...) asparagine glycosylation sites follow: N41, N68, N237, and N249. The next 2 membrane-spanning stretches (helical) occupy residues 298–318 (VSFFAPTVSLAFVINLMAIYL) and 341–361 (ITLFHILLISNIVSAVFHGVL). N403 is a glycosylation site (N-linked (GlcNAc...) asparagine). The helical transmembrane segment at 413 to 433 (PLAGLAMFVYFVIMFILYLVV) threads the bilayer.

The protein belongs to the ligand-gated ion channel (TC 1.A.9) family. Acetylcholine receptor (TC 1.A.9.1) subfamily.

The protein resides in the cytoplasmic vesicle membrane. Thought to regulate endocytosis in coelomocytes through modulation of phospholipase C activity. Possible acetylcholine receptor. In Caenorhabditis briggsae, this protein is Acetylcholine receptor-like protein cup-4.